A 474-amino-acid chain; its full sequence is Bifunctional ribulose 5-phosphate reductase/CDP-ribitol pyrophosphorylase Bcs1 (474 aa).

Residues 1-238 (MNKNKNIGII…DKLFQSRSHF (238 aa)) form a ribitol-5-phosphate cytidylyltransferase region. The interval 250-474 (YDMKDQVLVV…ITNILADLYK (225 aa)) is ribulose-5-phosphate reductase.

It in the N-terminal section; belongs to the IspD/TarI cytidylyltransferase family. In the C-terminal section; belongs to the short-chain dehydrogenases/reductases (SDR) family. Monomer.

It catalyses the reaction D-ribitol 5-phosphate + CTP + H(+) = CDP-L-ribitol + diphosphate. It carries out the reaction D-ribitol 5-phosphate + NADP(+) = D-ribulose 5-phosphate + NADPH + H(+). Its pathway is capsule biogenesis; capsule polysaccharide biosynthesis. Functionally, catalyzes the NADPH-dependent reduction of D-ribulose 5-phosphate to D-ribitol 5-phosphate and the further reaction of D-ribitol 5-phosphate with CTP to form CDP-ribitol. This Haemophilus influenzae protein is Bifunctional ribulose 5-phosphate reductase/CDP-ribitol pyrophosphorylase Bcs1.